The following is a 309-amino-acid chain: Elongation factor Ts (309 aa).

Residues 80 to 83 are involved in Mg(2+) ion dislocation from EF-Tu; that stretch reads TDFV.

This sequence belongs to the EF-Ts family.

Its subcellular location is the cytoplasm. Associates with the EF-Tu.GDP complex and induces the exchange of GDP to GTP. It remains bound to the aminoacyl-tRNA.EF-Tu.GTP complex up to the GTP hydrolysis stage on the ribosome. The protein is Elongation factor Ts of Rhodospirillum rubrum (strain ATCC 11170 / ATH 1.1.1 / DSM 467 / LMG 4362 / NCIMB 8255 / S1).